Reading from the N-terminus, the 120-residue chain is HTH-type transcriptional regulator NmtR (120 aa).

Residues 15 to 109 (LDSQAAAQVA…EAIYHSEHLH (95 aa)) form the HTH arsR-type domain. Residues 49–72 (VTDLAEAIGMEQSAVSHQLRVLRN) constitute a DNA-binding region (H-T-H motif). Residues aspartate 91, histidine 93, histidine 104, and histidine 107 each contribute to the Ni(2+) site.

Homodimer.

With respect to regulation, binding to DNA is inhibited by nickel and, to some extent, cobalt ions. Represses transcription of ctpJ/nmtA, by binding to its promoter region. The polypeptide is HTH-type transcriptional regulator NmtR (nmtR) (Mycobacterium tuberculosis (strain ATCC 25618 / H37Rv)).